The primary structure comprises 149 residues: 3-dehydroquinate dehydratase (149 aa).

Residue Tyr-21 is the Proton acceptor of the active site. The substrate site is built by Asn-73, His-79, and Asp-86. His-99 serves as the catalytic Proton donor. Residues 100–101 (LT) and Arg-110 contribute to the substrate site.

The protein belongs to the type-II 3-dehydroquinase family. In terms of assembly, homododecamer.

It catalyses the reaction 3-dehydroquinate = 3-dehydroshikimate + H2O. It participates in metabolic intermediate biosynthesis; chorismate biosynthesis; chorismate from D-erythrose 4-phosphate and phosphoenolpyruvate: step 3/7. Catalyzes a trans-dehydration via an enolate intermediate. This chain is 3-dehydroquinate dehydratase, found in Thermus thermophilus (strain ATCC BAA-163 / DSM 7039 / HB27).